We begin with the raw amino-acid sequence, 1047 residues long: Protein masquerade (1047 aa).

The signal sequence occupies residues methionine 1–alanine 30. A CLIP 1 region spans residues lysine 54–isoleucine 87. Cystine bridges form between cysteine 56–cysteine 85, cysteine 60–cysteine 78, and cysteine 69–cysteine 86. An N-linked (GlcNAc...) asparagine glycan is attached at asparagine 95. Composition is skewed to low complexity over residues alanine 98–proline 139 and lysine 148–alanine 175. The interval alanine 98 to alanine 189 is disordered. Over residues lysine 176–alanine 189 the composition is skewed to basic and acidic residues. A CLIP 2 region spans residues aspartate 192–valine 224. Disulfide bonds link cysteine 193-cysteine 222, cysteine 197-cysteine 216, and cysteine 206-cysteine 223. N-linked (GlcNAc...) asparagine glycosylation is present at asparagine 251. A disordered region spans residues glutamine 252–glutamine 335. A compositionally biased stretch (low complexity) spans serine 263–threonine 280. Asparagine 287 carries N-linked (GlcNAc...) asparagine glycosylation. Acidic residues predominate over residues alanine 307–proline 325. The CLIP 3 stretch occupies residues glutamate 343 to valine 374. Intrachain disulfides connect cysteine 344-cysteine 372, cysteine 348-cysteine 366, and cysteine 357-cysteine 373. Residues glycine 376–leucine 428 are disordered. A CLIP 4 region spans residues arginine 457–aspartate 492. Disulfide bonds link cysteine 458–cysteine 490, cysteine 462–cysteine 484, and cysteine 471–cysteine 491. Positions alanine 498–proline 527 are disordered. Residues proline 501–proline 527 are compositionally biased toward pro residues. The tract at residues glutamate 532–alanine 567 is CLIP 5. Cystine bridges form between cysteine 533-cysteine 565, cysteine 537-cysteine 558, and cysteine 546-cysteine 566. An N-linked (GlcNAc...) asparagine glycan is attached at asparagine 582. Positions aspartate 583–arginine 673 are disordered. Pro residues-rich tracts occupy residues proline 588–proline 606, asparagine 613–proline 638, and glycine 650–threonine 661. Over residues proline 662 to proline 672 the composition is skewed to low complexity. 5 disulfides stabilise this stretch: cysteine 682-cysteine 916, cysteine 829-cysteine 845, cysteine 930-cysteine 1001, cysteine 961-cysteine 981, and cysteine 991-cysteine 1019. N-linked (GlcNAc...) asparagine glycosylation is found at asparagine 726 and asparagine 794. The peptidase S1 stretch occupies residues valine 803–serine 1043.

This sequence belongs to the peptidase S1 family. CLIP subfamily. Post-translationally, proteolytically cleaved and thereafter secreted.

It is found in the secreted. The protein resides in the cell projection. Its subcellular location is the axon. Its function is as follows. In embryogenesis, has a role in somatic muscle attachment and in the development of axonal pathways probably by stabilizing cell-matrix adhesion and/or by acting as a competitive antagonist of serine proteases. This chain is Protein masquerade, found in Drosophila melanogaster (Fruit fly).